The primary structure comprises 677 residues: UvrABC system protein B (677 aa).

Positions 24 to 412 (EGVLEGVPAQ…EGIVVEQVIR (389 aa)) constitute a Helicase ATP-binding domain. An ATP-binding site is contributed by 37–44 (GVTGSGKT). The Beta-hairpin motif lies at 90–113 (YYDYYQPEAYLPSSDTYIEKDLAI). The region spanning 429 to 591 (QIDDLMEEIQ…ITPQQIKKAR (163 aa)) is the Helicase C-terminal domain. The UVR domain occupies 635-670 (EKSMERTRKLMQEAAKKLEFIEAAQYRDELLKMEDL).

The protein belongs to the UvrB family. As to quaternary structure, forms a heterotetramer with UvrA during the search for lesions. Interacts with UvrC in an incision complex.

Its subcellular location is the cytoplasm. Functionally, the UvrABC repair system catalyzes the recognition and processing of DNA lesions. A damage recognition complex composed of 2 UvrA and 2 UvrB subunits scans DNA for abnormalities. Upon binding of the UvrA(2)B(2) complex to a putative damaged site, the DNA wraps around one UvrB monomer. DNA wrap is dependent on ATP binding by UvrB and probably causes local melting of the DNA helix, facilitating insertion of UvrB beta-hairpin between the DNA strands. Then UvrB probes one DNA strand for the presence of a lesion. If a lesion is found the UvrA subunits dissociate and the UvrB-DNA preincision complex is formed. This complex is subsequently bound by UvrC and the second UvrB is released. If no lesion is found, the DNA wraps around the other UvrB subunit that will check the other stand for damage. This is UvrABC system protein B from Bacteroides fragilis (strain ATCC 25285 / DSM 2151 / CCUG 4856 / JCM 11019 / LMG 10263 / NCTC 9343 / Onslow / VPI 2553 / EN-2).